A 233-amino-acid chain; its full sequence is 2-C-methyl-D-erythritol 4-phosphate cytidylyltransferase (233 aa).

It belongs to the IspD/TarI cytidylyltransferase family. IspD subfamily.

The catalysed reaction is 2-C-methyl-D-erythritol 4-phosphate + CTP + H(+) = 4-CDP-2-C-methyl-D-erythritol + diphosphate. It functions in the pathway isoprenoid biosynthesis; isopentenyl diphosphate biosynthesis via DXP pathway; isopentenyl diphosphate from 1-deoxy-D-xylulose 5-phosphate: step 2/6. In terms of biological role, catalyzes the formation of 4-diphosphocytidyl-2-C-methyl-D-erythritol from CTP and 2-C-methyl-D-erythritol 4-phosphate (MEP). In Syntrophotalea carbinolica (strain DSM 2380 / NBRC 103641 / GraBd1) (Pelobacter carbinolicus), this protein is 2-C-methyl-D-erythritol 4-phosphate cytidylyltransferase.